Here is a 200-residue protein sequence, read N- to C-terminus: Probable gluconokinase (200 aa).

34–41 (GVSGSGKT) is an ATP binding site.

Belongs to the gluconokinase GntK/GntV family.

The enzyme catalyses D-gluconate + ATP = 6-phospho-D-gluconate + ADP + H(+). It functions in the pathway carbohydrate acid metabolism; D-gluconate degradation. This chain is Probable gluconokinase, found in Dictyostelium discoideum (Social amoeba).